A 411-amino-acid polypeptide reads, in one-letter code: Dual specificity protein phosphatase Mpk3 (411 aa).

Residues 22–149 (DSKDLILLDC…FRQAFPEWCE (128 aa)) form the Rhodanese domain. Residues 184–197 (DSACSSSAESSDCE) show a composition bias toward low complexity. The disordered stretch occupies residues 184-209 (DSACSSSAESSDCESSSHHHHHHSHH). Residues 214-358 (APVEIIPGLL…LLSFESQLRL (145 aa)) form the Tyrosine-protein phosphatase domain. Cys302 functions as the Phosphocysteine intermediate in the catalytic mechanism.

It belongs to the protein-tyrosine phosphatase family. Non-receptor class dual specificity subfamily. Interacts (via N-terminal region) with phosphorylated rl. In terms of tissue distribution, ubiquitous expression in eye and wing imaginal disks. Enriched in ovary.

It is found in the cytoplasm. The enzyme catalyses O-phospho-L-tyrosyl-[protein] + H2O = L-tyrosyl-[protein] + phosphate. It carries out the reaction O-phospho-L-seryl-[protein] + H2O = L-seryl-[protein] + phosphate. It catalyses the reaction O-phospho-L-threonyl-[protein] + H2O = L-threonyl-[protein] + phosphate. With respect to regulation, activity abolished by tyrosine phosphatase inhibitor sodium vanadate. Activated by rl. Functionally, negatively regulates the activity of members of the MAP kinase family in response to changes in the cellular environment. Has a specificity for the ERK family. Acts as a negative regulator in a variety of developmental processes including cell differentiation and proliferation controlled by the Ras/ERK pathway. Suppresses the photoreceptor cell differentiation and wing vein formation. Required for proper oogenesis and early embryogenesis. Functions autonomously in a subset of photoreceptor progenitor cells in eye imaginal disks. Also appears to be required in surrounding non-neuronal cells for ommatidial patterning and photoreceptor differentiation. Plays a role in the maintenance of epithelial integrity during tracheal development. This is Dual specificity protein phosphatase Mpk3 (Mkp3) from Drosophila melanogaster (Fruit fly).